Reading from the N-terminus, the 258-residue chain is Glutathione S-transferase DHAR3, chloroplastic (258 aa).

Residues M1–M42 constitute a chloroplast transit peptide. C52 carries the S-glutathionyl cysteine modification. Glutathione is bound by residues K54 and D65. Positions 54 and 65 each coordinate L-ascorbate. A GST N-terminal domain is found at S56–K129. C66 (nucleophile) is an active-site residue. An intrachain disulfide couples C66 to C69. The short motif at C66–K71 is the Glutathione-binding element. Glutathione contacts are provided by K93, V106, S119, H205, and W252. Positions Y130–G258 constitute a GST C-terminal domain. K255 lines the L-ascorbate pocket.

The protein belongs to the GST superfamily. DHAR family. As to quaternary structure, monomer. Interacts with TRX3. Partial S-glutathionylation and intramolecular disulfide bond formation between Cys-66 and Cys-69 in the presence of oxidized glutathione (GSSG). Could be reduced by TRX-dependent process.

It is found in the plastid. Its subcellular location is the chloroplast stroma. The catalysed reaction is RX + glutathione = an S-substituted glutathione + a halide anion + H(+). It catalyses the reaction L-dehydroascorbate + 2 glutathione = glutathione disulfide + L-ascorbate. In terms of biological role, displays a dual function. As a soluble protein, exhibits glutathione-dependent thiol transferase and dehydroascorbate (DHA) reductase activities. Key component of the ascorbate recycling system. Involved in the redox homeostasis, especially in scavenging of ROS under oxidative stresses. This Arabidopsis thaliana (Mouse-ear cress) protein is Glutathione S-transferase DHAR3, chloroplastic (DHAR3).